The primary structure comprises 138 residues: MLIPRKVKHRKQHHPRQRGIASGGTSVSFGDYGIQAMGHAYITNRQIESARIAINRHIKRGGKVWINIFPDRPLTKKPAETRMGSGKGSPEWWVANVKPGRVLFELSYPDEKIAREALTRAIHKLPIKARIVTREEQF.

The segment covering 1–17 (MLIPRKVKHRKQHHPRQ) has biased composition (basic residues). A disordered region spans residues 1–24 (MLIPRKVKHRKQHHPRQRGIASGG).

This sequence belongs to the universal ribosomal protein uL16 family. As to quaternary structure, part of the 50S ribosomal subunit.

Functionally, binds 23S rRNA and is also seen to make contacts with the A and possibly P site tRNAs. This Mycolicibacterium gilvum (strain PYR-GCK) (Mycobacterium gilvum (strain PYR-GCK)) protein is Large ribosomal subunit protein uL16.